A 1368-amino-acid chain; its full sequence is Cingulin (1368 aa).

The tract at residues 9 to 378 (MADQHIPVGQ…KQQRTVQSEF (370 aa)) is interaction with TJP3/ZO3 and myosin. Positions 9-435 (MADQHIPVGQ…EKLPSLQVQP (427 aa)) are head. Residues 41–55 (QDSYGVAVRVQGIDG) carry the ZIM motif. 5 disordered regions span residues 71 to 264 (FGVQ…TKPL), 278 to 312 (GQVRGRTARRSQALKDERKRSQSLDGRKNYHDTAD), 1053 to 1080 (SRKEIGEAQKQAKEKTAEAERHQFNSSR), 1163 to 1183 (NRSRDQMEQQRAELNQERSRG), and 1308 to 1368 (QQEI…TSSC). Over residues 83 to 97 (NASNTSPPNYQNYSS) the composition is skewed to polar residues. The interaction with F-actin stretch occupies residues 101–294 (GPSRSISSES…ARRSQALKDE (194 aa)). Composition is skewed to low complexity over residues 116–132 (PYGSRGYRPSSSHYSSA) and 200–211 (SQSSRDSAWSRS). Residues 150 to 295 (SSLPRPLQAS…RRSQALKDER (146 aa)) are interaction with TJP2/ZO2. The segment covering 228-256 (SATSQQSTSVSNKTKKNGLSTSSPSNQSN) has biased composition (polar residues). Residues 290–312 (ALKDERKRSQSLDGRKNYHDTAD) show a composition bias toward basic and acidic residues. Positions 377–1368 (EFQLKSTPDL…TESNLQTSSC (992 aa)) are interaction with myosin. Residues 436–1330 (GEDTISLGSQ…VMEKESKRKP (895 aa)) are a coiled coil. The span at 1320–1338 (KVMEKESKRKPIRPAHDDD) shows a compositional bias: basic and acidic residues. The interval 1331–1368 (IRPAHDDDLSSDGEFGGPYDPSSITSLLTESNLQTSSC) is tail. A compositionally biased stretch (polar residues) spans 1352-1368 (SSITSLLTESNLQTSSC).

The protein belongs to the cingulin family. In terms of assembly, parallel homodimer. Interacts with TJP1/ZO1 and TJP2/ZO2 in vivo, and TJP3/ZO3, myosin and OCLN in vitro, possibly directly. Acts as an F-actin bundling protein in vitro. In terms of tissue distribution, localized on the cytoplasmic face of tight junctions of polarized epithelia and some endothelia.

Its subcellular location is the cell junction. It localises to the tight junction. In terms of biological role, probably plays a role in the formation and regulation of the tight junction (TJ) paracellular permeability barrier, possibly by linking ZO proteins to the actomyosin cytoskeleton. This Xenopus laevis (African clawed frog) protein is Cingulin.